We begin with the raw amino-acid sequence, 215 residues long: Adenylate kinase (215 aa).

Position 10–15 (G10–T15) interacts with ATP. The NMP stretch occupies residues S30–V59. Residues T31, R36, G57–V59, G85–R88, and Q92 contribute to the AMP site. The tract at residues G122 to D159 is LID. ATP-binding positions include R123 and T132–Y133. R156 and R167 together coordinate AMP. Residue Q200 participates in ATP binding.

Belongs to the adenylate kinase family. As to quaternary structure, monomer.

The protein localises to the cytoplasm. The catalysed reaction is AMP + ATP = 2 ADP. Its pathway is purine metabolism; AMP biosynthesis via salvage pathway; AMP from ADP: step 1/1. Catalyzes the reversible transfer of the terminal phosphate group between ATP and AMP. Plays an important role in cellular energy homeostasis and in adenine nucleotide metabolism. This is Adenylate kinase from Neisseria meningitidis serogroup B (strain ATCC BAA-335 / MC58).